A 421-amino-acid chain; its full sequence is Serine--tRNA ligase (421 aa).

227-229 contacts L-serine; it reads TSE. ATP-binding positions include 257 to 259 and valine 273; that span reads RRE. Glutamate 280 contributes to the L-serine binding site. Residue 344–347 participates in ATP binding; that stretch reads ELTS. Threonine 379 contacts L-serine.

Belongs to the class-II aminoacyl-tRNA synthetase family. Type-1 seryl-tRNA synthetase subfamily. Homodimer. The tRNA molecule binds across the dimer.

Its subcellular location is the cytoplasm. It catalyses the reaction tRNA(Ser) + L-serine + ATP = L-seryl-tRNA(Ser) + AMP + diphosphate + H(+). The catalysed reaction is tRNA(Sec) + L-serine + ATP = L-seryl-tRNA(Sec) + AMP + diphosphate + H(+). Its pathway is aminoacyl-tRNA biosynthesis; selenocysteinyl-tRNA(Sec) biosynthesis; L-seryl-tRNA(Sec) from L-serine and tRNA(Sec): step 1/1. Catalyzes the attachment of serine to tRNA(Ser). Is also able to aminoacylate tRNA(Sec) with serine, to form the misacylated tRNA L-seryl-tRNA(Sec), which will be further converted into selenocysteinyl-tRNA(Sec). The polypeptide is Serine--tRNA ligase (Leifsonia xyli subsp. xyli (strain CTCB07)).